The sequence spans 300 residues: MAGTSRNVRVLVTGANGFVGSHIVSLLLSRGYVVNATVRRQTASEKLIATFACDRLHVFVIPDLTSEQALDEAIRGCKYVVHVASTVPSKEQASGIDIDSAISSIESVMNSAVAHASEKVVLTSSMSTHLDVKAPILNESTWYTPDRSSTKLMVQYMSSKTLVERRAWELSSTLKLPLTTVAPVYIGGPTIIHEQDPKSSVSNQDLLRCIEDESRSRIPGWIDVRTVAHLHLHAIEDHSLNGRRILACTHNRGVVPMDCSLMNSLLAKDSAALIDFDRTKRDLLEQIDAFNSGQTRRVVA.

NADP(+) is bound by residues 14 to 20, Arg-39, 63 to 64, 83 to 85, Tyr-156, Lys-160, 183 to 186, and Ser-199; these read GANGFVG, DL, VAS, and PVYI. The Proton donor role is filled by Lys-160.

The protein belongs to the NAD(P)-dependent epimerase/dehydratase family. Dihydroflavonol-4-reductase subfamily.

It functions in the pathway secondary metabolite biosynthesis. Functionally, fatty acid hydroxylase; part of the gene cluster that mediates the biosynthesis of the glycolipid biosurfactant ustilagic acid (UA). UA is a secreted cellobiose glycolipid that is toxic for many microorganisms and confers biocontrol activity to U.maydis. UA consists of 15,16-dihydroxypalmitic or 2,15,16-trihydroxypalmitic acid, which is O-glycosidically linked to cellobiose at its terminal hydroxyl group. In addition, the cellobiose moiety is acetylated and acylated with a short-chain hydroxy fatty acid. UA biosynthesis starts with omega-hydroxylation of palmitic acid catalyzed by the cytochrome P450 monooxygenase cyp1. Terminal hydroxylation of palmitic acid precedes subterminal hydroxylation catalyzed by the cytochrome P450 monooxygenase cyp2. Sequential glucosylation of the hydroxy fatty acid is probably catalyzed by the glycosyltransferase ugt1. The cellobiose lipid is further decorated by acetylation of the proximal glucose residue and by acylation with a short-chain beta-hydroxy fatty acid at the distal glucose residue. The acyltransferase uat1 may be a good candidate for catalyzing either acetylation or acylation of the cellobiose lipid. The fatty acid synthase fas2 may be involved in synthesis of the carbon backbone of the short-chain beta-hydroxy fatty acid esterified to the cellobiose disaccharide. The secreted UA consists of a mixture of both alpha-hydroxylated and non-hydroxylated glycolipids; therefore, alpha-hydroxylation of the long-chain fatty, catalyzed by the fatty acid hydroxylase ahd1, occurs late in UA biosynthesis and may be the last step before secretion. The chain is Fatty acid hydroxylase uhd1 from Mycosarcoma maydis (Corn smut fungus).